A 214-amino-acid polypeptide reads, in one-letter code: Adenylate kinase (214 aa).

10 to 15 is an ATP binding site; the sequence is GAGKGT. The NMP stretch occupies residues 30-59; the sequence is STGDMLRAAIKAGTELGLKAKAVMDAGQLV. AMP-binding positions include T31, R36, 57 to 59, 85 to 88, and Q92; these read QLV and GFPR. Positions 122-159 are LID; it reads GRRVHSGSGRTYHVVFNPPKVEGKDDVTGEDLVIRADD. Residues R123 and 132 to 133 each bind ATP; that span reads TY. AMP contacts are provided by R156 and R167. Q200 is a binding site for ATP.

This sequence belongs to the adenylate kinase family. In terms of assembly, monomer.

The protein localises to the cytoplasm. The catalysed reaction is AMP + ATP = 2 ADP. Its pathway is purine metabolism; AMP biosynthesis via salvage pathway; AMP from ADP: step 1/1. Catalyzes the reversible transfer of the terminal phosphate group between ATP and AMP. Plays an important role in cellular energy homeostasis and in adenine nucleotide metabolism. The polypeptide is Adenylate kinase (Aeromonas hydrophila subsp. hydrophila (strain ATCC 7966 / DSM 30187 / BCRC 13018 / CCUG 14551 / JCM 1027 / KCTC 2358 / NCIMB 9240 / NCTC 8049)).